We begin with the raw amino-acid sequence, 82 residues long: Immediate early response 3-interacting protein 1 (82 aa).

The next 2 membrane-spanning stretches (helical) occupy residues 2-22 (AFTL…IAVL) and 62-82 (VMRV…LLFG).

The protein belongs to the YOS1 family.

Its subcellular location is the endoplasmic reticulum membrane. Regulator of endoplasmic reticulum secretion that acts as a key determinant of brain size. Required for secretion of extracellular matrix proteins. Required for correct brain development by depositing sufficient extracellular matrix proteins for tissue integrity and the proliferation of neural progenitors. Acts as a regulator of the unfolded protein response (UPR). The chain is Immediate early response 3-interacting protein 1 from Rattus norvegicus (Rat).